A 444-amino-acid chain; its full sequence is Phosphoglucosamine mutase (444 aa).

The Phosphoserine intermediate role is filled by S102. Mg(2+) contacts are provided by S102, D241, D243, and D245. A Phosphoserine modification is found at S102.

This sequence belongs to the phosphohexose mutase family. It depends on Mg(2+) as a cofactor. Activated by phosphorylation.

It carries out the reaction alpha-D-glucosamine 1-phosphate = D-glucosamine 6-phosphate. Its function is as follows. Catalyzes the conversion of glucosamine-6-phosphate to glucosamine-1-phosphate. The protein is Phosphoglucosamine mutase of Actinobacillus pleuropneumoniae serotype 5b (strain L20).